A 159-amino-acid polypeptide reads, in one-letter code: MDLEIFDDTNSVPAEKIQLVKDVLEFSGKYLELPEDTEMSVTLMNNEQIHEINLKYRGVDKATDVISFAIEEDDPDELPIILPDDVDFEEPKNIGDMMISMDKVKEQAEYLGHSEDRELGFLTVHGFLHLNGYDHMKAEDEKVMFKLQRDILDAYGLKR.

His125, His129, and His135 together coordinate Zn(2+).

This sequence belongs to the endoribonuclease YbeY family. Zn(2+) is required as a cofactor.

The protein localises to the cytoplasm. In terms of biological role, single strand-specific metallo-endoribonuclease involved in late-stage 70S ribosome quality control and in maturation of the 3' terminus of the 16S rRNA. The polypeptide is Endoribonuclease YbeY (Ligilactobacillus salivarius (strain UCC118) (Lactobacillus salivarius)).